A 210-amino-acid polypeptide reads, in one-letter code: Large ribosomal subunit protein uL3 (210 aa).

The segment at 125 to 154 (RHGFRGGPKTHGQSDRHRAPGSIGAGTTPG) is disordered.

It belongs to the universal ribosomal protein uL3 family. Part of the 50S ribosomal subunit. Forms a cluster with proteins L14 and L19.

In terms of biological role, one of the primary rRNA binding proteins, it binds directly near the 3'-end of the 23S rRNA, where it nucleates assembly of the 50S subunit. The chain is Large ribosomal subunit protein uL3 from Chloroflexus aggregans (strain MD-66 / DSM 9485).